The chain runs to 447 residues: Argininosuccinate synthase (447 aa).

ATP contacts are provided by residues 17–25 and Ala-43; that span reads AFSGGLDTS. Tyr-99 serves as a coordination point for L-citrulline. ATP-binding residues include Gly-129 and Thr-131. 3 residues coordinate L-aspartate: Thr-131, Asn-135, and Asp-136. L-citrulline is bound at residue Asn-135. Position 136 (Asp-136) interacts with ATP. Residues Arg-139 and Ser-192 each coordinate L-citrulline. Residue Asp-194 coordinates ATP. The L-citrulline site is built by Thr-201, Glu-203, and Glu-280.

This sequence belongs to the argininosuccinate synthase family. Type 2 subfamily. Homotetramer.

Its subcellular location is the cytoplasm. The enzyme catalyses L-citrulline + L-aspartate + ATP = 2-(N(omega)-L-arginino)succinate + AMP + diphosphate + H(+). The protein operates within amino-acid biosynthesis; L-arginine biosynthesis; L-arginine from L-ornithine and carbamoyl phosphate: step 2/3. The sequence is that of Argininosuccinate synthase from Salmonella paratyphi B (strain ATCC BAA-1250 / SPB7).